A 1259-amino-acid polypeptide reads, in one-letter code: Translocation and assembly module subunit TamB (1259 aa).

An N-formylmethionine modification is found at Met1. Residues Met1–Lys6 are Cytoplasmic-facing. Residues Ile7 to Gly27 traverse the membrane as a helical; Signal-anchor for type II membrane protein segment. Topologically, residues Thr28–Phe1259 are periplasmic.

This sequence belongs to the TamB family. As to quaternary structure, interacts with TamA to form the translocation and assembly module (TAM).

It is found in the cell inner membrane. Its function is as follows. Component of the translocation and assembly module (TAM), which facilitates the insertion and assembly of specific beta-barrel proteins into the outer membrane. Promotes the assembly and secretion across the outer membrane of a subset of autotransporters, such as Ag43. Involved in the assembly of the outer membrane usher protein FimD. In vitro, when TAM is reconstituted into preformed liposomes, it can promote the assembly of several outer membrane proteins, including OmpA, EspP, Ag43 and FadL. TamA is sufficient to catalyze a low level of outer membrane protein (OMP) assembly, but both TamA and TamB are required for efficient OMP assembly. TamB may regulate TamA activity. It could regulate conformational changes in TamA to drive its function in OMP assembly. It could also act as a chaperone that facilitate the transport of nascent membrane proteins across the periplasm to TamA in the outer membrane. In addition, is involved in outer membrane lipid homeostasis. Likely transports phospholipids between the inner membrane and the outer membrane. It would provide a bridge-like structure that protects phospholipids as they travel across the periplasm. One possible explanation for the apparent dual function of TAM is that TamB is a somewhat generic transporter of hydrophobic molecules. Functionally, tamB, YdbH and YhdP are redundant, but not equivalent, in performing an essential function for growth and maintaining lipid homeostasis in the outer membrane. The transport functions of TamB and YhdP could be differentiated according to the fatty acid saturation state of the phospholipids, with TamB transporting more unsaturated phospholipids and YhdP more saturated phospholipids. Any of these three proteins is sufficient for growth. The sequence is that of Translocation and assembly module subunit TamB from Escherichia coli (strain K12).